The primary structure comprises 196 residues: Large ribosomal subunit protein bL9 (196 aa).

Belongs to the bacterial ribosomal protein bL9 family.

Functionally, binds to the 23S rRNA. This Gluconobacter oxydans (strain 621H) (Gluconobacter suboxydans) protein is Large ribosomal subunit protein bL9.